The following is a 319-amino-acid chain: Protease HtpX homolog (319 aa).

2 helical membrane passes run 6–26 and 28–48; these read TAML…VIGG and GGMM…YWNS. Residue His130 participates in Zn(2+) binding. The active site involves Glu131. His134 lines the Zn(2+) pocket. The next 2 helical transmembrane spans lie at 145–165 and 172–192; these read LTAT…FFGG and PLGF…AMLV. Position 201 (Glu201) interacts with Zn(2+). The disordered stretch occupies residues 279–319; the sequence is REMSAGSTAPARPDNAVRRSRSVPKTGWGRGGSEPPKGPWS.

Belongs to the peptidase M48B family. The cofactor is Zn(2+).

The protein localises to the cell inner membrane. The chain is Protease HtpX homolog from Sinorhizobium fredii (strain NBRC 101917 / NGR234).